A 100-amino-acid chain; its full sequence is Urease subunit gamma (100 aa).

Belongs to the urease gamma subunit family. In terms of assembly, heterotrimer of UreA (gamma), UreB (beta) and UreC (alpha) subunits. Three heterotrimers associate to form the active enzyme.

The protein localises to the cytoplasm. It catalyses the reaction urea + 2 H2O + H(+) = hydrogencarbonate + 2 NH4(+). Its pathway is nitrogen metabolism; urea degradation; CO(2) and NH(3) from urea (urease route): step 1/1. This Azotobacter vinelandii (strain DJ / ATCC BAA-1303) protein is Urease subunit gamma.